The following is a 325-amino-acid chain: Acetyl-coenzyme A carboxylase carboxyl transferase subunit alpha (325 aa).

The region spanning 44-298 (QLEARADQLR…KAAIQDNLQA (255 aa)) is the CoA carboxyltransferase C-terminal domain.

Belongs to the AccA family. In terms of assembly, acetyl-CoA carboxylase is a heterohexamer composed of biotin carboxyl carrier protein (AccB), biotin carboxylase (AccC) and two subunits each of ACCase subunit alpha (AccA) and ACCase subunit beta (AccD).

The protein resides in the cytoplasm. It carries out the reaction N(6)-carboxybiotinyl-L-lysyl-[protein] + acetyl-CoA = N(6)-biotinyl-L-lysyl-[protein] + malonyl-CoA. It participates in lipid metabolism; malonyl-CoA biosynthesis; malonyl-CoA from acetyl-CoA: step 1/1. Functionally, component of the acetyl coenzyme A carboxylase (ACC) complex. First, biotin carboxylase catalyzes the carboxylation of biotin on its carrier protein (BCCP) and then the CO(2) group is transferred by the carboxyltransferase to acetyl-CoA to form malonyl-CoA. This is Acetyl-coenzyme A carboxylase carboxyl transferase subunit alpha from Picosynechococcus sp. (strain ATCC 27264 / PCC 7002 / PR-6) (Agmenellum quadruplicatum).